The following is a 321-amino-acid chain: 4-hydroxy-2-oxoglutarate aldolase, mitochondrial (321 aa).

The N-terminal 23 residues, 1–23, are a transit peptide targeting the mitochondrion; that stretch reads MLGPQIWASMRQGLSRGLSRNVK. Substrate is bound at residue 71–72; it reads ST. K190 serves as the catalytic Schiff-base intermediate with substrate. Substrate contacts are provided by S192 and G216.

This sequence belongs to the DapA family. In terms of assembly, homotetramer.

The protein resides in the mitochondrion. The catalysed reaction is (4S)-4-hydroxy-2-oxoglutarate = glyoxylate + pyruvate. It carries out the reaction (4R)-4-hydroxy-2-oxoglutarate = glyoxylate + pyruvate. With respect to regulation, inhibited by divalent cations. Catalyzes the final step in the metabolic pathway of hydroxyproline. This Mus musculus (Mouse) protein is 4-hydroxy-2-oxoglutarate aldolase, mitochondrial (Hoga1).